We begin with the raw amino-acid sequence, 660 residues long: Probable cation-transporting P-type ATPase J (660 aa).

Helical transmembrane passes span 33–53 (WAAL…CGAP), 60–80 (LFLA…LQAL), 94–114 (AAIG…IVIF), 261–281 (IGMV…GETL), and 292–312 (MIVA…LAAI). The active-site 4-aspartylphosphate intermediate is the Asp-340. Residues Asp-544 and Asp-548 each coordinate Mg(2+). The chain crosses the membrane as a helical span at residues 598–618 (IVVANLIVAVTFIAGLVVWDL).

This sequence belongs to the cation transport ATPase (P-type) (TC 3.A.3) family. Type IB subfamily.

It localises to the cell membrane. It carries out the reaction ATP + H2O = ADP + phosphate + H(+). The protein is Probable cation-transporting P-type ATPase J (ctpJ) of Mycobacterium tuberculosis (strain CDC 1551 / Oshkosh).